The sequence spans 271 residues: Protein FAM110D (271 aa).

Disordered regions lie at residues 1-83 (MLLA…RPDS), 116-145 (PRDA…APEA), and 186-245 (PQSW…PVSV). The segment covering 68-78 (RPVRRGSGRRL) has biased composition (basic residues). A compositionally biased stretch (low complexity) spans 116–126 (PRDAAPSSPAS). The segment covering 220-231 (SPGGAGGGGGSE) has biased composition (gly residues).

This sequence belongs to the FAM110 family.

The protein is Protein FAM110D (FAM110D) of Homo sapiens (Human).